Reading from the N-terminus, the 92-residue chain is Beta-2-microglobulin (92 aa).

Residues 2 to 89 (PQIQVYSRHP…NHVSMDKPMT (88 aa)) form the Ig-like C1-type domain. A disulfide bond links Cys22 and Cys77.

This sequence belongs to the beta-2-microglobulin family. In terms of assembly, heterodimer of an alpha chain and a beta chain. Beta-2-microglobulin is the beta-chain of major histocompatibility complex class I molecules.

It is found in the secreted. Its function is as follows. Component of the class I major histocompatibility complex (MHC). Involved in the presentation of peptide antigens to the immune system. This Mus spretus (Western Mediterranean mouse) protein is Beta-2-microglobulin (B2m).